The chain runs to 664 residues: UvrABC system protein B (664 aa).

In terms of domain architecture, Helicase ATP-binding spans 23-180; that stretch reads EGLNRGMRFQ…ERLARIGYQR (158 aa). An ATP-binding site is contributed by 36-43; the sequence is GVTGSGKT. Positions 89–112 match the Beta-hairpin motif; the sequence is YYDYYQPEAYIPTKDLYIEKNADI. A Helicase C-terminal domain is found at 429-588; sequence DLVNEIVKVK…ITPRSVIKPL (160 aa). The region spanning 622–657 is the UVR domain; the sequence is EEYMAVLEEEMYRAASELRYEDAAALRDELFRIREE.

The protein belongs to the UvrB family. As to quaternary structure, forms a heterotetramer with UvrA during the search for lesions. Interacts with UvrC in an incision complex.

The protein localises to the cytoplasm. Its function is as follows. The UvrABC repair system catalyzes the recognition and processing of DNA lesions. A damage recognition complex composed of 2 UvrA and 2 UvrB subunits scans DNA for abnormalities. Upon binding of the UvrA(2)B(2) complex to a putative damaged site, the DNA wraps around one UvrB monomer. DNA wrap is dependent on ATP binding by UvrB and probably causes local melting of the DNA helix, facilitating insertion of UvrB beta-hairpin between the DNA strands. Then UvrB probes one DNA strand for the presence of a lesion. If a lesion is found the UvrA subunits dissociate and the UvrB-DNA preincision complex is formed. This complex is subsequently bound by UvrC and the second UvrB is released. If no lesion is found, the DNA wraps around the other UvrB subunit that will check the other stand for damage. The chain is UvrABC system protein B from Thermotoga petrophila (strain ATCC BAA-488 / DSM 13995 / JCM 10881 / RKU-1).